The chain runs to 101 residues: uncharacterized protein (101 aa).

This is an uncharacterized protein from Mycoplasma pneumoniae (strain ATCC 29342 / M129 / Subtype 1) (Mycoplasmoides pneumoniae).